A 135-amino-acid polypeptide reads, in one-letter code: HTH-type transcriptional regulator ZntR homolog (135 aa).

In terms of domain architecture, HTH merR-type spans 1–69 (MKIGALAKAL…LSEIKSLLNL (69 aa)). Residues 4–23 (GALAKALGCTVETIRYYEQQ) constitute a DNA-binding region (H-T-H motif).

Its function is as follows. Transcriptional regulator. In Haemophilus influenzae (strain ATCC 51907 / DSM 11121 / KW20 / Rd), this protein is HTH-type transcriptional regulator ZntR homolog (zntR).